Consider the following 489-residue polypeptide: GTPase Der (489 aa).

2 consecutive EngA-type G domains span residues 3-166 and 201-374; these read PVVA…FDDV and IKLA…DSST. GTP-binding positions include 9 to 16, 56 to 60, 118 to 121, 207 to 214, 254 to 258, and 319 to 322; these read GRPNVGKS, DTGGI, NKTD, DTAGV, and NKWD. The region spanning 375–459 is the KH-like domain; that stretch reads KRISTSILTR…PIRIEFREGT (85 aa).

It belongs to the TRAFAC class TrmE-Era-EngA-EngB-Septin-like GTPase superfamily. EngA (Der) GTPase family. Associates with the 50S ribosomal subunit.

Its function is as follows. GTPase that plays an essential role in the late steps of ribosome biogenesis. The sequence is that of GTPase Der from Psychromonas ingrahamii (strain DSM 17664 / CCUG 51855 / 37).